The primary structure comprises 226 residues: MAQRTAIALLSGGLDSATAAALAQEAGDRVIGLSFDYGQRHRRELKAAAKVAAHLNLAEHHQVDVNLGAWGGSALTDPNQTVPTSGVEEGVIPVTYVPGRNTVFIAIGLSLAEARGAERLVLGVNAVDYSGYPDCRPDYLDAFQTLATLSSKAGREGHGPQLWAPLVQWSKTKIVDEALRLGVPIGETWSCYSGGSRPCGVCDSCRIRDSALREAGRPDLCSNAEG.

Residue 10 to 20 (LSGGLDSATAA) coordinates ATP. Positions 191, 199, 202, and 205 each coordinate Zn(2+).

The protein belongs to the QueC family. Requires Zn(2+) as cofactor.

It carries out the reaction 7-carboxy-7-deazaguanine + NH4(+) + ATP = 7-cyano-7-deazaguanine + ADP + phosphate + H2O + H(+). Its pathway is purine metabolism; 7-cyano-7-deazaguanine biosynthesis. In terms of biological role, catalyzes the ATP-dependent conversion of 7-carboxy-7-deazaguanine (CDG) to 7-cyano-7-deazaguanine (preQ(0)). The protein is 7-cyano-7-deazaguanine synthase of Synechococcus sp. (strain CC9902).